A 364-amino-acid polypeptide reads, in one-letter code: UDP-N-acetylglucosamine--N-acetylmuramyl-(pentapeptide) pyrophosphoryl-undecaprenol N-acetylglucosamine transferase (364 aa).

Residues 16 to 18 (TGG), N128, R166, S195, I249, and Q294 each bind UDP-N-acetyl-alpha-D-glucosamine.

This sequence belongs to the glycosyltransferase 28 family. MurG subfamily.

It is found in the cell inner membrane. The catalysed reaction is di-trans,octa-cis-undecaprenyl diphospho-N-acetyl-alpha-D-muramoyl-L-alanyl-D-glutamyl-meso-2,6-diaminopimeloyl-D-alanyl-D-alanine + UDP-N-acetyl-alpha-D-glucosamine = di-trans,octa-cis-undecaprenyl diphospho-[N-acetyl-alpha-D-glucosaminyl-(1-&gt;4)]-N-acetyl-alpha-D-muramoyl-L-alanyl-D-glutamyl-meso-2,6-diaminopimeloyl-D-alanyl-D-alanine + UDP + H(+). It participates in cell wall biogenesis; peptidoglycan biosynthesis. Cell wall formation. Catalyzes the transfer of a GlcNAc subunit on undecaprenyl-pyrophosphoryl-MurNAc-pentapeptide (lipid intermediate I) to form undecaprenyl-pyrophosphoryl-MurNAc-(pentapeptide)GlcNAc (lipid intermediate II). The protein is UDP-N-acetylglucosamine--N-acetylmuramyl-(pentapeptide) pyrophosphoryl-undecaprenol N-acetylglucosamine transferase of Chromohalobacter salexigens (strain ATCC BAA-138 / DSM 3043 / CIP 106854 / NCIMB 13768 / 1H11).